Reading from the N-terminus, the 470-residue chain is ATP synthase subunit beta (470 aa).

Glycine 155–threonine 162 serves as a coordination point for ATP.

The protein belongs to the ATPase alpha/beta chains family. As to quaternary structure, F-type ATPases have 2 components, CF(1) - the catalytic core - and CF(0) - the membrane proton channel. CF(1) has five subunits: alpha(3), beta(3), gamma(1), delta(1), epsilon(1). CF(0) has three main subunits: a(1), b(2) and c(9-12). The alpha and beta chains form an alternating ring which encloses part of the gamma chain. CF(1) is attached to CF(0) by a central stalk formed by the gamma and epsilon chains, while a peripheral stalk is formed by the delta and b chains.

The protein resides in the cell membrane. It carries out the reaction ATP + H2O + 4 H(+)(in) = ADP + phosphate + 5 H(+)(out). In terms of biological role, produces ATP from ADP in the presence of a proton gradient across the membrane. The catalytic sites are hosted primarily by the beta subunits. The chain is ATP synthase subunit beta from Lacticaseibacillus casei (Lactobacillus casei).